The following is a 65-amino-acid chain: Large ribosomal subunit protein bL35 (65 aa).

The protein belongs to the bacterial ribosomal protein bL35 family.

This is Large ribosomal subunit protein bL35 from Methylobacillus flagellatus (strain ATCC 51484 / DSM 6875 / VKM B-1610 / KT).